The primary structure comprises 262 residues: Pimeloyl-[acyl-carrier protein] methyl ester esterase (262 aa).

Residues histidine 15 to proline 242 form the AB hydrolase-1 domain. Residues tryptophan 22, serine 82–leucine 83, and phenylalanine 143–glutamine 147 contribute to the substrate site. The active-site Nucleophile is serine 82. Residues aspartate 207 and histidine 235 contribute to the active site. Histidine 235 contributes to the substrate binding site.

Belongs to the AB hydrolase superfamily. Carboxylesterase BioH family. As to quaternary structure, monomer.

Its subcellular location is the cytoplasm. The catalysed reaction is 6-carboxyhexanoyl-[ACP] methyl ester + H2O = 6-carboxyhexanoyl-[ACP] + methanol + H(+). The protein operates within cofactor biosynthesis; biotin biosynthesis. In terms of biological role, the physiological role of BioH is to remove the methyl group introduced by BioC when the pimeloyl moiety is complete. It allows to synthesize pimeloyl-ACP via the fatty acid synthetic pathway through the hydrolysis of the ester bonds of pimeloyl-ACP esters. The sequence is that of Pimeloyl-[acyl-carrier protein] methyl ester esterase from Shigella flexneri.